A 548-amino-acid polypeptide reads, in one-letter code: Probable zinc metalloprotease EGY1, chloroplastic (548 aa).

The transit peptide at 1–18 (MGTLTSVAFAAAVNIRFR) directs the protein to the chloroplast. The segment covering 61–76 (NSNRDDSIGENGETHK) has biased composition (basic and acidic residues). Positions 61 to 116 (NSNRDDSIGENGETHKSSVVKTATFEEEDEETSKSSSTTSSSNEFGSDKTSMPSTI) are disordered. Over residues 103–116 (NEFGSDKTSMPSTI) the composition is skewed to polar residues. Helical transmembrane passes span 242–262 (YVIALILFLLTIGSSVELGIA), 290–310 (LYPFVDAALPLAYGVLGILLF), 326–346 (LSIPYFIPNITLGSFGAITQF), 361–381 (LAGPFAGAALSVSMFAVGLFL), 388–408 (ANDLVQVPSMLFQGSLLLGLI), 416–436 (AALHAATVSIHPLVIAGWCGL), 474–494 (MLGLRVLGGPLALPWGLYVLI), and 516–536 (ALVGIALILVVLTLLPVWDEL).

The protein belongs to the peptidase M50B family. As to expression, expressed in roots, leaves, cotyledons, hypocotyls, stems, flowers and siliques.

It localises to the plastid. It is found in the chloroplast membrane. Membrane-associated and ATP-independent metalloprotease required for development of both thylakoid grana and well-organized lamellae in chloroplast. Required for the accumulation of chlorophyll and chlorophyll a/b binding (CAB) proteins (from both PS I and PS II) in chloroplast membranes, and for grana formation and normal chloroplast development. Involved in the regulation of nuclear gene expression in response to ammonium stress and interacts with ABA signaling. Carries out beta-casein degradation in an ATP-independent manner in vitro. The polypeptide is Probable zinc metalloprotease EGY1, chloroplastic (EGY1) (Arabidopsis thaliana (Mouse-ear cress)).